A 748-amino-acid chain; its full sequence is MVLLRVLILLLSWAAGMGGQYGNPLNKYIRHYEGLSYNVDSLHQKHQRAKRAVSHEDQFLRLDFHAHGRHFNLRMKRDTSLFSDEFKVETSNKVLDYDTSHIYTGHIYGEEGSFSHGSVIDGRFEGFIQTRGGTFYVEPAERYIKDRTLPFHSVIYHEDDINYPHKYGPQGGCADHSVFERMRKYQMTGVEEVTQIPQEEHAANGPELLRKKRTTSAEKNTCQLYIQTDHLFFKYYGTREAVIAQISSHVKAIDTIYQTTDFSGIRNISFMVKRIRINTTADEKDPTNPFRFPNIGVEKFLELNSEQNHDDYCLAYVFTDRDFDDGVLGLAWVGAPSGSSGGICEKSKLYSDGKKKSLNTGIITVQNYGSHVPPKVSHITFAHEVGHNFGSPHDSGTECTPGESKNLGQKENGNYIMYARATSGDKLNNNKFSLCSIRNISQVLEKKRNNCFVESGQPICGNGMVEQGEECDCGYSDQCKDECCFDANQPEGRKCKLKPGKQCSPSQGPCCTAQCAFKSKSEKCRDDSDCAREGICNGFTALCPASDPKPNFTDCNRHTQVCINGQCAGSICEKYGLEECTCASSDGKDDKELCHVCCMKKMDPSTCASTGSVQWSRHFSGRTITLQPGSPCNDFRGYCDVFMRCRLVDADGPLARLKKAIFSPELYENIAEWIVAHWWAVLLMGIALIMLMAGFIKICSVHTPSSNPKLPPPKPLPGTLKRRRPPQPIQQPQRQRPRESYQMGHMRR.

A signal peptide spans 1 to 19 (MVLLRVLILLLSWAAGMGG). The propeptide occupies 20–213 (QYGNPLNKYI…NGPELLRKKR (194 aa)). Residues 20-672 (QYGNPLNKYI…SPELYENIAE (653 aa)) are Extracellular-facing. The short motif at 171–178 (GGCADHSV) is the Cysteine switch element. Residue Cys-173 participates in Zn(2+) binding. In terms of domain architecture, Peptidase M12B spans 220-456 (NTCQLYIQTD…KRNNCFVESG (237 aa)). Disulfide bonds link Cys-222-Cys-313, Cys-344-Cys-451, Cys-399-Cys-435, Cys-460-Cys-495, Cys-471-Cys-484, Cys-473-Cys-479, Cys-483-Cys-515, Cys-503-Cys-511, Cys-510-Cys-536, Cys-524-Cys-543, Cys-530-Cys-562, Cys-555-Cys-567, Cys-572-Cys-598, Cys-580-Cys-607, Cys-582-Cys-597, Cys-594-Cys-639, and Cys-632-Cys-645. Asn-267 and Asn-278 each carry an N-linked (GlcNAc...) asparagine glycan. His-383 contacts Zn(2+). Glu-384 is an active-site residue. Zn(2+) contacts are provided by His-387 and His-393. Asn-439 is a glycosylation site (N-linked (GlcNAc...) asparagine). Positions 457–551 (QPICGNGMVE…LCPASDPKPN (95 aa)) constitute a Disintegrin domain. Asn-551 carries N-linked (GlcNAc...) asparagine glycosylation. Residues 673–693 (WIVAHWWAVLLMGIALIMLMA) traverse the membrane as a helical segment. Residues 694-748 (GFIKICSVHTPSSNPKLPPPKPLPGTLKRRRPPQPIQQPQRQRPRESYQMGHMRR) lie on the Cytoplasmic side of the membrane. The tract at residues 704-748 (PSSNPKLPPPKPLPGTLKRRRPPQPIQQPQRQRPRESYQMGHMRR) is disordered. The short motif at 708 to 715 (PKLPPPKP) is the SH3-binding element. Thr-719 is subject to Phosphothreonine; by FAM20C. Positions 722–728 (RRRPPQP) match the SH3-binding motif. The interaction with AP2A1, AP2A2 and AP2M1 stretch occupies residues 734–748 (RQRPRESYQMGHMRR).

In terms of assembly, forms a ternary EFNA5-EPHA3-ADAM10 complex mediating EFNA5 extracellular domain shedding by ADAM10 which regulates the EFNA5-EPHA3 complex internalization and function, the cleavage occurs in trans, with ADAM10 and its substrate being on the membranes of opposing cells. Interacts with the clathrin adapter AP2 complex subunits AP2A1, AP2A2, AP2B1, and AP2M1; this interaction facilitates ADAM10 endocytosis from the plasma membrane during long-term potentiation in hippocampal neurons. Forms a ternary complex composed of ADAM10, EPHA4 and CADH1; within the complex, ADAM10 cleaves CADH1 which disrupts adherens junctions. Interacts with EPHA2. Interacts with NGF in a divalent cation-dependent manner. Interacts with TSPAN14; the interaction promotes ADAM10 maturation and cell surface expression. Interacts with TSPAN5, TSPAN10, TSPAN14, TSPAN15, TSPAN17 and TSPAN33; these interactions regulate ADAM10 substrate specificity, endocytosis and turnover. Interacts (via extracellular domain) with TSPAN33 (via extracellular domain) and (via cytoplasmic domain) with AFDN; interaction with TSPAN33 allows the docking of ADAM10 to zonula adherens through a PDZ11-dependent interaction between TSPAN33 and PLEKHA7 while interaction with AFDN locks ADAM10 at zonula adherens. Interacts with DLG1; this interaction recruits ADAM10 to the cell membrane during long-term depression in hippocampal neurons. Interacts (via extracellular domain) with BACE1 (via extracellular domain). Interacts with FAM171A1. (Microbial infection) Interacts with S.aureus hly; this interaction is necessary for toxin pore formation, disruption of focal adhesions and S.aureus hly-mediated cytotoxicity. Requires Zn(2+) as cofactor. Post-translationally, the precursor is cleaved by furin and PCSK7. Expressed in the brain (at protein level). Expressed in spleen, lymph node, thymus, peripheral blood leukocyte, bone marrow, cartilage, chondrocytes and fetal liver.

Its subcellular location is the cell membrane. It is found in the golgi apparatus membrane. The protein localises to the cytoplasmic vesicle. The protein resides in the clathrin-coated vesicle. It localises to the cell projection. Its subcellular location is the axon. It is found in the dendrite. The protein localises to the cell junction. The protein resides in the adherens junction. It localises to the cytoplasm. The catalysed reaction is Endopeptidase of broad specificity.. With respect to regulation, catalytically inactive when the propeptide is intact and associated with the mature enzyme. The disintegrin and cysteine-rich regions modulate access of substrates to exerts an inhibitory effect on the cleavage of ADAM10 substrates. Transmembrane metalloprotease which mediates the ectodomain shedding of a myriad of transmembrane proteins, including adhesion proteins, growth factor precursors and cytokines being essential for development and tissue homeostasis. Associates with six members of the tetraspanin superfamily TspanC8 which regulate its exit from the endoplasmic reticulum and its substrate selectivity. Cleaves the membrane-bound precursor of TNF-alpha at '76-Ala-|-Val-77' to its mature soluble form. Responsible for the proteolytical release of soluble JAM3 from endothelial cells surface. Responsible for the proteolytic release of several other cell-surface proteins, including heparin-binding epidermal growth-like factor, ephrin-A2, CD44, CDH2 and for constitutive and regulated alpha-secretase cleavage of amyloid precursor protein (APP). Contributes to the normal cleavage of the cellular prion protein. Involved in the cleavage of the adhesion molecule L1 at the cell surface and in released membrane vesicles, suggesting a vesicle-based protease activity. Also controls the proteolytic processing of Notch and mediates lateral inhibition during neurogenesis. Required for the development of type 1 transitional B cells into marginal zone B cells, probably by cleaving Notch. Responsible for the FasL ectodomain shedding and for the generation of the remnant ADAM10-processed FasL (FasL APL) transmembrane form. Also cleaves the ectodomain of the integral membrane proteins CORIN and ITM2B. Mediates the proteolytic cleavage of LAG3, leading to release the secreted form of LAG3. Mediates the proteolytic cleavage of IL6R and IL11RA, leading to the release of secreted forms of IL6R and IL11RA. Enhances the cleavage of CHL1 by BACE1. Cleaves NRCAM. Cleaves TREM2, resulting in shedding of the TREM2 ectodomain. Involved in the development and maturation of glomerular and coronary vasculature. During development of the cochlear organ of Corti, promotes pillar cell separation by forming a ternary complex with CADH1 and EPHA4 and cleaving CADH1 at adherens junctions. May regulate the EFNA5-EPHA3 signaling. Regulates leukocyte transmigration as a sheddase for the adherens junction protein VE-cadherin/CDH5 in endothelial cells. Functionally, (Microbial infection) Promotes the cytotoxic activity of S.aureus hly by binding to the toxin at zonula adherens and promoting formation of toxin pores. The polypeptide is Disintegrin and metalloproteinase domain-containing protein 10 (Homo sapiens (Human)).